The following is a 35-amino-acid chain: Beta-amanitin proprotein (35 aa).

A propeptide spanning residues 1–10 (MSDINATRLP) is cleaved from the precursor. Residues 11–18 (IWGIGCDP) constitute a cross-link (cyclopeptide (Ile-Pro)). A cross-link (2'-cysteinyl-6'-hydroxytryptophan sulfoxide (Trp-Cys)) is located at residues 12–16 (WGIGC). The propeptide occupies 19–35 (CVGDDVTALLTRGEALC).

This sequence belongs to the MSDIN fungal toxin family. Post-translationally, processed by the macrocyclase-peptidase enzyme POPB to yield a toxic cyclic octapeptide. POPB first removes 10 residues from the N-terminus. Conformational trapping of the remaining peptide forces the enzyme to release this intermediate rather than proceed to macrocyclization. The enzyme rebinds the remaining peptide in a different conformation and catalyzes macrocyclization of the N-terminal 8 residues. In terms of tissue distribution, expressed in basidiocarps.

Its function is as follows. Toxin belonging to the bicyclic octapeptides amatoxins that acts by binding non-competitively to RNA polymerase II and greatly slowing the elongation of transcripts from target promoters. In Amanita exitialis (Guangzhou destroying angel), this protein is Beta-amanitin proprotein.